The following is a 42-amino-acid chain: uncharacterized protein (42 aa).

Residues 15–35 (INVCLSFFFLFYFIFVLFFAA) form a helical membrane-spanning segment.

It is found in the membrane. This is an uncharacterized protein from Dictyostelium discoideum (Social amoeba).